Consider the following 316-residue polypeptide: Ribosomal RNA small subunit methyltransferase H (316 aa).

S-adenosyl-L-methionine is bound by residues 32 to 34 (AGH), aspartate 52, phenylalanine 79, aspartate 100, and glutamine 107.

It belongs to the methyltransferase superfamily. RsmH family.

It is found in the cytoplasm. The catalysed reaction is cytidine(1402) in 16S rRNA + S-adenosyl-L-methionine = N(4)-methylcytidine(1402) in 16S rRNA + S-adenosyl-L-homocysteine + H(+). In terms of biological role, specifically methylates the N4 position of cytidine in position 1402 (C1402) of 16S rRNA. The polypeptide is Ribosomal RNA small subunit methyltransferase H (Lysinibacillus sphaericus (strain C3-41)).